The following is a 378-amino-acid chain: Probable 3-hydroxyisobutyryl-CoA hydrolase 2 (378 aa).

Gly-115, Glu-138, and Asp-146 together coordinate substrate. A Microbody targeting signal motif is present at residues 376–378; sequence AKL.

The protein belongs to the enoyl-CoA hydratase/isomerase family.

Its subcellular location is the peroxisome. It catalyses the reaction 3-hydroxy-2-methylpropanoyl-CoA + H2O = 3-hydroxy-2-methylpropanoate + CoA + H(+). The protein operates within amino-acid degradation; L-valine degradation. Functionally, involved in valine catabolism. The sequence is that of Probable 3-hydroxyisobutyryl-CoA hydrolase 2 from Arabidopsis thaliana (Mouse-ear cress).